A 488-amino-acid chain; its full sequence is 3-octaprenyl-4-hydroxybenzoate carboxy-lyase (488 aa).

Asparagine 172 contributes to the Mn(2+) binding site. Residues 175–177 (IYR), 189–191 (RWL), and 194–195 (RG) each bind prenylated FMN. Residue glutamate 238 participates in Mn(2+) binding. The Proton donor role is filled by aspartate 287.

This sequence belongs to the UbiD family. Homohexamer. Requires prenylated FMN as cofactor. Mn(2+) serves as cofactor.

It localises to the cell membrane. It carries out the reaction a 4-hydroxy-3-(all-trans-polyprenyl)benzoate + H(+) = a 2-(all-trans-polyprenyl)phenol + CO2. Its pathway is cofactor biosynthesis; ubiquinone biosynthesis. Functionally, catalyzes the decarboxylation of 3-octaprenyl-4-hydroxy benzoate to 2-octaprenylphenol, an intermediate step in ubiquinone biosynthesis. This chain is 3-octaprenyl-4-hydroxybenzoate carboxy-lyase, found in Pseudomonas putida (strain W619).